The sequence spans 323 residues: Lipoyl synthase (323 aa).

Cys-53, Cys-58, Cys-64, Cys-79, Cys-83, Cys-86, and Ser-293 together coordinate [4Fe-4S] cluster. The Radical SAM core domain occupies Trp-65 to Ser-282.

It belongs to the radical SAM superfamily. Lipoyl synthase family. [4Fe-4S] cluster is required as a cofactor.

It localises to the cytoplasm. It catalyses the reaction [[Fe-S] cluster scaffold protein carrying a second [4Fe-4S](2+) cluster] + N(6)-octanoyl-L-lysyl-[protein] + 2 oxidized [2Fe-2S]-[ferredoxin] + 2 S-adenosyl-L-methionine + 4 H(+) = [[Fe-S] cluster scaffold protein] + N(6)-[(R)-dihydrolipoyl]-L-lysyl-[protein] + 4 Fe(3+) + 2 hydrogen sulfide + 2 5'-deoxyadenosine + 2 L-methionine + 2 reduced [2Fe-2S]-[ferredoxin]. The protein operates within protein modification; protein lipoylation via endogenous pathway; protein N(6)-(lipoyl)lysine from octanoyl-[acyl-carrier-protein]: step 2/2. Catalyzes the radical-mediated insertion of two sulfur atoms into the C-6 and C-8 positions of the octanoyl moiety bound to the lipoyl domains of lipoate-dependent enzymes, thereby converting the octanoylated domains into lipoylated derivatives. The protein is Lipoyl synthase of Zymomonas mobilis subsp. mobilis (strain ATCC 31821 / ZM4 / CP4).